The following is an 81-amino-acid chain: Large ribosomal subunit protein bL27 (81 aa).

Polar residues predominate over residues M1–K11. Positions M1–L21 are disordered.

It belongs to the bacterial ribosomal protein bL27 family.

The sequence is that of Large ribosomal subunit protein bL27 from Borrelia hermsii (strain HS1 / DAH).